Reading from the N-terminus, the 265-residue chain is Aliphatic sulfonates import ATP-binding protein SsuB 1 (265 aa).

Residues 31–255 (FAFKGVEKRF…RRGSAELARL (225 aa)) form the ABC transporter domain. ATP is bound at residue 63–70 (GKSGCGKS).

Belongs to the ABC transporter superfamily. Aliphatic sulfonates importer (TC 3.A.1.17.2) family. In terms of assembly, the complex is composed of two ATP-binding proteins (SsuB), two transmembrane proteins (SsuC) and a solute-binding protein (SsuA).

The protein localises to the cell inner membrane. The catalysed reaction is ATP + H2O + aliphatic sulfonate-[sulfonate-binding protein]Side 1 = ADP + phosphate + aliphatic sulfonateSide 2 + [sulfonate-binding protein]Side 1.. In terms of biological role, part of the ABC transporter complex SsuABC involved in aliphatic sulfonates import. Responsible for energy coupling to the transport system. This Mesorhizobium japonicum (strain LMG 29417 / CECT 9101 / MAFF 303099) (Mesorhizobium loti (strain MAFF 303099)) protein is Aliphatic sulfonates import ATP-binding protein SsuB 1.